We begin with the raw amino-acid sequence, 1616 residues long: S-layer-related protein (1616 aa).

Residues 1–30 (MKSLLRKWNGMMIIALVISLLTPAWGKASA) form the signal peptide. The BIG2 domain occupies 1115–1185 (VKALKLDRGT…GSGTVQATYE (71 aa)). Disordered regions lie at residues 1191–1244 (ARVS…DGRN), 1372–1455 (NKRN…GRAR), 1523–1554 (ARGR…REAG), and 1585–1616 (FAGG…ARPC). The segment covering 1199–1225 (STGGGSDTGSGTGSGSGGGSAGGGGTA) has biased composition (gly residues). Residues 1372-1387 (NKRNRRLRKLRPKNRK) show a composition bias toward basic residues. The segment covering 1406-1416 (PPECSASCPPA) has biased composition (low complexity). Positions 1438–1502 (WSPPRSASPT…ALDPAPAAAD (65 aa)) constitute an SLH domain. Positions 1536 to 1554 (RGADTRTDERDAHARREAG) are enriched in basic and acidic residues. The segment covering 1594 to 1616 (GRTRGRTLRARPARLPVRKARPC) has biased composition (basic residues).

Its subcellular location is the secreted. The protein resides in the cell wall. The protein localises to the S-layer. Functionally, the S-layer is a paracrystalline mono-layered assembly of proteins which coats the surface of bacteria. May play a role in the export of butirosin from the organism. The chain is S-layer-related protein (butB) from Niallia circulans (Bacillus circulans).